The following is a 475-amino-acid chain: Ankyrin repeat, SAM and basic leucine zipper domain-containing protein 1 (475 aa).

Residues methionine 1–tryptophan 24 are disordered. Phosphoserine occurs at positions 16, 17, and 19. ANK repeat units lie at residues glutamate 44 to serine 73, phenylalanine 77 to phenylalanine 106, aspartate 109 to arginine 146, lysine 147 to alanine 176, asparagine 180 to isoleucine 209, and aspartate 213 to glycine 242. Positions threonine 273–glutamate 336 constitute an SAM domain.

As to quaternary structure, interacts with DDX4, PIWIL1, RANBP9 and TDRD1.

It localises to the cytoplasm. Its function is as follows. Plays a central role during spermatogenesis by repressing transposable elements and preventing their mobilization, which is essential for the germline integrity. Acts via the piRNA metabolic process, which mediates the repression of transposable elements during meiosis by forming complexes composed of piRNAs and Piwi proteins and governs the methylation and subsequent repression of transposons. Its association with pi-bodies suggests a participation in the primary piRNAs metabolic process. Required prior to the pachytene stage to facilitate the production of multiple types of piRNAs, including those associated with repeats involved in the regulation of retrotransposons. May act by mediating protein-protein interactions during germ cell maturation. The protein is Ankyrin repeat, SAM and basic leucine zipper domain-containing protein 1 (ASZ1) of Notamacropus eugenii (Tammar wallaby).